Here is a 1129-residue protein sequence, read N- to C-terminus: Ubiquitin carboxyl-terminal hydrolase 15 (1129 aa).

Residues 1–26 form a disordered region; it reads MVLSNVDAEEVNMDSSMELEESSQEP. Acidic residues predominate over residues 7–23; it reads DAEEVNMDSSMELEESS. Positions 51 to 204 constitute an MATH domain; sequence HASYSWVVKN…NDEICISVTV (154 aa). The 316-residue stretch at 230–545 folds into the USP domain; the sequence is VGLKNQGATC…NAYMLVYFRK (316 aa). C239 acts as the Nucleophile in catalysis. Catalysis depends on H481, which acts as the Proton acceptor.

Belongs to the peptidase C19 family.

It is found in the nucleus. It catalyses the reaction Thiol-dependent hydrolysis of ester, thioester, amide, peptide and isopeptide bonds formed by the C-terminal Gly of ubiquitin (a 76-residue protein attached to proteins as an intracellular targeting signal).. Functionally, hydrolase that deubiquitinates target proteins. Cleaves the UBL propeptide in sde2. Involved in regulating the steady-state levels of proteins including prp4. The protein is Ubiquitin carboxyl-terminal hydrolase 15 of Schizosaccharomyces pombe (strain 972 / ATCC 24843) (Fission yeast).